The chain runs to 220 residues: Ribose-5-phosphate isomerase A (220 aa).

Substrate contacts are provided by residues 28–31 (TGST), 81–84 (DGAD), and 94–97 (KGGG). E103 functions as the Proton acceptor in the catalytic mechanism. Position 121 (K121) interacts with substrate.

The protein belongs to the ribose 5-phosphate isomerase family. Homodimer.

The catalysed reaction is aldehydo-D-ribose 5-phosphate = D-ribulose 5-phosphate. It functions in the pathway carbohydrate degradation; pentose phosphate pathway; D-ribose 5-phosphate from D-ribulose 5-phosphate (non-oxidative stage): step 1/1. Its function is as follows. Catalyzes the reversible conversion of ribose-5-phosphate to ribulose 5-phosphate. This chain is Ribose-5-phosphate isomerase A, found in Hydrogenovibrio crunogenus (strain DSM 25203 / XCL-2) (Thiomicrospira crunogena).